The sequence spans 428 residues: Adenosylmethionine-8-amino-7-oxononanoate aminotransferase (428 aa).

Tryptophan 52 is a substrate binding site. 112–113 contacts pyridoxal 5'-phosphate; that stretch reads GS. Tyrosine 144 contacts substrate. Aspartate 245 provides a ligand contact to pyridoxal 5'-phosphate. The substrate site is built by lysine 274 and glycine 307. Lysine 274 bears the N6-(pyridoxal phosphate)lysine mark. 308-309 lines the pyridoxal 5'-phosphate pocket; that stretch reads PT. Arginine 391 is a binding site for substrate.

This sequence belongs to the class-III pyridoxal-phosphate-dependent aminotransferase family. BioA subfamily. Homodimer. Requires pyridoxal 5'-phosphate as cofactor.

It is found in the cytoplasm. It catalyses the reaction (8S)-8-amino-7-oxononanoate + S-adenosyl-L-methionine = S-adenosyl-4-methylsulfanyl-2-oxobutanoate + (7R,8S)-7,8-diammoniononanoate. It participates in cofactor biosynthesis; biotin biosynthesis; 7,8-diaminononanoate from 8-amino-7-oxononanoate (SAM route): step 1/1. Functionally, catalyzes the transfer of the alpha-amino group from S-adenosyl-L-methionine (SAM) to 7-keto-8-aminopelargonic acid (KAPA) to form 7,8-diaminopelargonic acid (DAPA). It is the only aminotransferase known to utilize SAM as an amino donor. The polypeptide is Adenosylmethionine-8-amino-7-oxononanoate aminotransferase (Buchnera aphidicola subsp. Acyrthosiphon pisum (strain APS) (Acyrthosiphon pisum symbiotic bacterium)).